Reading from the N-terminus, the 99-residue chain is UPF0751 protein BCE_A0020 (99 aa).

This sequence belongs to the UPF0751 family.

This Bacillus cereus (strain ATCC 10987 / NRS 248) protein is UPF0751 protein BCE_A0020.